Here is a 278-residue protein sequence, read N- to C-terminus: Release factor glutamine methyltransferase (278 aa).

S-adenosyl-L-methionine contacts are provided by residues 117 to 121, D140, and N184; that span reads GTGSG. A substrate-binding site is contributed by 184-187; the sequence is NPPY.

This sequence belongs to the protein N5-glutamine methyltransferase family. PrmC subfamily.

The enzyme catalyses L-glutaminyl-[peptide chain release factor] + S-adenosyl-L-methionine = N(5)-methyl-L-glutaminyl-[peptide chain release factor] + S-adenosyl-L-homocysteine + H(+). Functionally, methylates the class 1 translation termination release factors RF1/PrfA and RF2/PrfB on the glutamine residue of the universally conserved GGQ motif. This is Release factor glutamine methyltransferase from Bacteroides thetaiotaomicron (strain ATCC 29148 / DSM 2079 / JCM 5827 / CCUG 10774 / NCTC 10582 / VPI-5482 / E50).